The sequence spans 34 residues: Potassium channel toxin alpha-KTx 6.2 (34 aa).

Disulfide bonds link Cys3–Cys24, Cys9–Cys29, Cys13–Cys19, and Cys31–Cys34. At Cys34 the chain carries Cysteine amide.

Belongs to the short scorpion toxin superfamily. Potassium channel inhibitor family. Alpha-KTx 06 subfamily. In terms of tissue distribution, expressed by the venom gland.

Its subcellular location is the secreted. In terms of biological role, blocks voltage-gated potassium channels Kv1.2/KCNA2 (IC(50)=0.12-0.8 nM), KCa3.1/KCNN4 (IC(50)=1-2.2 nM), Shaker B (IC(50)=2.39-80 nM), Kv1.1/KCNA1 (IC(50)=37-45 or no activity, depending on the study), Kv1.3/KCNA3 (IC(50)=150-180 or no activity, depending on the study). The protein is Potassium channel toxin alpha-KTx 6.2 of Scorpio palmatus (Israeli golden scorpion).